We begin with the raw amino-acid sequence, 1058 residues long: Outer capsid protein VP4 (1058 aa).

The protein belongs to the orthoreovirus lambda-2 protein family.

Its subcellular location is the virion. It catalyses the reaction a 5'-end diphospho-ribonucleoside in mRNA + GTP + H(+) = a 5'-end (5'-triphosphoguanosine)-ribonucleoside in mRNA + diphosphate. It carries out the reaction a 5'-end (5'-triphosphoguanosine)-ribonucleoside in mRNA + S-adenosyl-L-methionine = a 5'-end (N(7)-methyl 5'-triphosphoguanosine)-ribonucleoside in mRNA + S-adenosyl-L-homocysteine. Its function is as follows. Outer capsid protein involved in mRNA capping. Catalyzes the last 3 enzymatic activities for formation of the 5' cap structure on the viral plus-strand transcripts, namely the RNA guanylyltransferase, RNA-7N- and RNA-2'O-methyltransferase activities. In Lymantria dispar cypovirus 1 (isolate Rao) (LdCPV-1), this protein is Outer capsid protein VP4 (S4).